Reading from the N-terminus, the 430-residue chain is MAKHVVVIGGGVGGIATAYNLRNLMPDLKITLISDRPYFGFTPAFPHLAMGWRKFEDISVPLAPLLPKFNIEFINEKAESIDPDANTVTTQSGKKIEYDYLVIATGPKLVFGAEGQEENSTSICTAEHALETQKKLQELYANPGPVVIGAIPGVSCFGPAYEFALMLHYELKKRGIRYKVPMTFITSEPYLGHFGVGGIGASKRLVEDLFAERNIDWIANVAVKAIEPDKVIYEDLNGNTHEVPAKFTMFMPSFQGPEVVASAGDKVANPANKMVIVNRCFQNPTYKNIFGVGVVTAIPPIEKTPIPTGVPKTGMMIEQMAMAVAHNIVNDIRNNPDKYAPRLSAICIADFGEDAGFFFADPVIPPRERVITKMGKWAHYFKTAFEKYFLWKVRNGNIAPSFEEKVLEIFLKVHPIELCKDCEGAPGSRC.

FAD is bound by residues Gly9–Gly13, Ser34–Arg36, Thr42–Pro43, and Thr105. Cys156 serves as the catalytic Cysteine persulfide intermediate. 2 disulfide bridges follow: Cys280–Cys422 and Cys419–Cys430. FAD is bound by residues Val294 and Gly314. Ile346 serves as a coordination point for a quinone. The active-site Cysteine persulfide intermediate is the Cys347. Lys382 serves as a coordination point for FAD.

This sequence belongs to the SQRD family. Homotrimer. FAD serves as cofactor.

Its subcellular location is the membrane. The catalysed reaction is n a quinone + n hydrogen sulfide + n H(+) = polysulfur(n-2) + n a quinol. Functionally, catalyzes the oxidation of hydrogen sulfide, with the help of a quinone. Consecutive reaction cycles lead to the accumulation of a polysulfide product on the active site Cys residues; these products are released when they exceed a critical length, typically as cyclooctasulfur. This Aquifex aeolicus (strain VF5) protein is Sulfide-quinone reductase.